Reading from the N-terminus, the 313-residue chain is Protein FixB (313 aa).

Position 255–283 (255–283 (LYLAVGISGQIQHMVGANASQTIFAINKD)) interacts with FAD.

It belongs to the ETF alpha-subunit/FixB family. Heterodimer of FixA and FixB.

It functions in the pathway amine and polyamine metabolism; carnitine metabolism. Functionally, required for anaerobic carnitine reduction. May bring reductant to CaiA. The chain is Protein FixB from Escherichia coli O127:H6 (strain E2348/69 / EPEC).